A 263-amino-acid chain; its full sequence is Putative hydro-lyase BPUM_0381 (263 aa).

It belongs to the D-glutamate cyclase family.

The protein is Putative hydro-lyase BPUM_0381 of Bacillus pumilus (strain SAFR-032).